The sequence spans 124 residues: Small ribosomal subunit protein uS12 (124 aa).

The disordered stretch occupies residues 1 to 25 (MPTINQLIRKPRKSQKEKTASPALQ). Asp-89 bears the 3-methylthioaspartic acid mark.

The protein belongs to the universal ribosomal protein uS12 family. Part of the 30S ribosomal subunit. Contacts proteins S8 and S17. May interact with IF1 in the 30S initiation complex.

Its function is as follows. With S4 and S5 plays an important role in translational accuracy. Interacts with and stabilizes bases of the 16S rRNA that are involved in tRNA selection in the A site and with the mRNA backbone. Located at the interface of the 30S and 50S subunits, it traverses the body of the 30S subunit contacting proteins on the other side and probably holding the rRNA structure together. The combined cluster of proteins S8, S12 and S17 appears to hold together the shoulder and platform of the 30S subunit. In Borrelia turicatae (strain 91E135), this protein is Small ribosomal subunit protein uS12.